Consider the following 185-residue polypeptide: Translocon-associated protein subunit gamma (185 aa).

M1 is modified (N-acetylmethionine). Residues 1–27 (MAPKGGSKQQSEEDLLLQDFSRNLSAK) are Lumenal-facing. Phosphoserine occurs at positions 7 and 11. The chain crosses the membrane as a helical span at residues 28–48 (SSALFFGNAFIVSAIPIWLYW). The Cytoplasmic portion of the chain corresponds to 49-54 (RIWHMD). The helical transmembrane segment at 55–76 (LIQSAVLYSVMTLVSTYLVAFA) threads the bilayer. Residues 77–135 (YKNVKFVLKHKVAQKREDAVSKEVTRKLSEADNRKMSRKEKDERILWKKNEVADYEATT) lie on the Lumenal side of the membrane. Position 105 is a phosphoserine (S105). A helical membrane pass occupies residues 136 to 157 (FSIFYNNTLFLVLVIVASFFIL). Residues 158 to 163 (KNFNPT) are Cytoplasmic-facing. The helical transmembrane segment at 164–184 (VNYILSISASSGLIALLSTGS) threads the bilayer.

The protein belongs to the TRAP-gamma family. In terms of assembly, heterotetramer of TRAP-alpha, TRAP-beta, TRAP-delta and TRAP-gamma.

It localises to the endoplasmic reticulum membrane. Functionally, TRAP proteins are part of a complex whose function is to bind calcium to the ER membrane and thereby regulate the retention of ER resident proteins. This is Translocon-associated protein subunit gamma (Ssr3) from Mus musculus (Mouse).